The chain runs to 98 residues: Large ribosomal subunit protein uL23 (98 aa).

Belongs to the universal ribosomal protein uL23 family. In terms of assembly, part of the 50S ribosomal subunit. Contacts protein L29, and trigger factor when it is bound to the ribosome.

One of the early assembly proteins it binds 23S rRNA. One of the proteins that surrounds the polypeptide exit tunnel on the outside of the ribosome. Forms the main docking site for trigger factor binding to the ribosome. In Bordetella bronchiseptica (strain ATCC BAA-588 / NCTC 13252 / RB50) (Alcaligenes bronchisepticus), this protein is Large ribosomal subunit protein uL23.